The primary structure comprises 81 residues: Small ribosomal subunit protein bS16 (81 aa).

The protein belongs to the bacterial ribosomal protein bS16 family.

This chain is Small ribosomal subunit protein bS16, found in Desulfotalea psychrophila (strain LSv54 / DSM 12343).